Reading from the N-terminus, the 192-residue chain is MSFTKIEQKLKEFTIDAGRYPSINTNEQLKELEMNIGNQLPSDYKDFLKKYGGCYLESKKTTDEIEYDVCYKPLEKDPWMGKGDDTQLLEGFYGLANDHNSLQKAIDTYSDRFPRNIIPIASSAGGNEICMDIDNGKILFWDHELSHPDKDFFLIANSFEEFVFSLVDEPIEADKEDDGILYIELDDDLLSS.

This Bacillus subtilis (strain 168) protein is SPbeta prophage-derived uncharacterized protein YokK (yokK).